We begin with the raw amino-acid sequence, 271 residues long: Formamidopyrimidine-DNA glycosylase (271 aa).

The active-site Schiff-base intermediate with DNA is Pro-2. Glu-3 (proton donor) is an active-site residue. Lys-57 functions as the Proton donor; for beta-elimination activity in the catalytic mechanism. Residues His-90, Arg-109, and Lys-151 each contribute to the DNA site. An FPG-type zinc finger spans residues 236–270; that stretch reads HVYGRGGETCTSCGNLLSEIRLGQRTTVFCGICQT. The active-site Proton donor; for delta-elimination activity is Arg-260.

This sequence belongs to the FPG family. Monomer. Zn(2+) is required as a cofactor.

The enzyme catalyses Hydrolysis of DNA containing ring-opened 7-methylguanine residues, releasing 2,6-diamino-4-hydroxy-5-(N-methyl)formamidopyrimidine.. It carries out the reaction 2'-deoxyribonucleotide-(2'-deoxyribose 5'-phosphate)-2'-deoxyribonucleotide-DNA = a 3'-end 2'-deoxyribonucleotide-(2,3-dehydro-2,3-deoxyribose 5'-phosphate)-DNA + a 5'-end 5'-phospho-2'-deoxyribonucleoside-DNA + H(+). Involved in base excision repair of DNA damaged by oxidation or by mutagenic agents. Acts as a DNA glycosylase that recognizes and removes damaged bases. Has a preference for oxidized purines, such as 7,8-dihydro-8-oxoguanine (8-oxoG). Has AP (apurinic/apyrimidinic) lyase activity and introduces nicks in the DNA strand. Cleaves the DNA backbone by beta-delta elimination to generate a single-strand break at the site of the removed base with both 3'- and 5'-phosphates. The polypeptide is Formamidopyrimidine-DNA glycosylase (Shewanella sp. (strain W3-18-1)).